The chain runs to 263 residues: 3-deoxy-manno-octulosonate cytidylyltransferase (263 aa).

This sequence belongs to the KdsB family.

It is found in the cytoplasm. It carries out the reaction 3-deoxy-alpha-D-manno-oct-2-ulosonate + CTP = CMP-3-deoxy-beta-D-manno-octulosonate + diphosphate. Its pathway is nucleotide-sugar biosynthesis; CMP-3-deoxy-D-manno-octulosonate biosynthesis; CMP-3-deoxy-D-manno-octulosonate from 3-deoxy-D-manno-octulosonate and CTP: step 1/1. It participates in bacterial outer membrane biogenesis; lipopolysaccharide biosynthesis. In terms of biological role, activates KDO (a required 8-carbon sugar) for incorporation into bacterial lipopolysaccharide in Gram-negative bacteria. The protein is 3-deoxy-manno-octulosonate cytidylyltransferase of Burkholderia cenocepacia (strain HI2424).